A 154-amino-acid polypeptide reads, in one-letter code: Aspartate carbamoyltransferase regulatory chain (154 aa).

Residues cysteine 109, cysteine 114, cysteine 138, and cysteine 141 each coordinate Zn(2+).

The protein belongs to the PyrI family. Contains catalytic and regulatory chains. The cofactor is Zn(2+).

Its function is as follows. Involved in allosteric regulation of aspartate carbamoyltransferase. The chain is Aspartate carbamoyltransferase regulatory chain from Yersinia pestis.